The following is a 145-amino-acid chain: D-aminoacyl-tRNA deacylase (145 aa).

The Gly-cisPro motif, important for rejection of L-amino acids signature appears at 137 to 138 (GP).

The protein belongs to the DTD family. Homodimer.

The protein resides in the cytoplasm. It catalyses the reaction glycyl-tRNA(Ala) + H2O = tRNA(Ala) + glycine + H(+). The catalysed reaction is a D-aminoacyl-tRNA + H2O = a tRNA + a D-alpha-amino acid + H(+). In terms of biological role, an aminoacyl-tRNA editing enzyme that deacylates mischarged D-aminoacyl-tRNAs. Also deacylates mischarged glycyl-tRNA(Ala), protecting cells against glycine mischarging by AlaRS. Acts via tRNA-based rather than protein-based catalysis; rejects L-amino acids rather than detecting D-amino acids in the active site. By recycling D-aminoacyl-tRNA to D-amino acids and free tRNA molecules, this enzyme counteracts the toxicity associated with the formation of D-aminoacyl-tRNA entities in vivo and helps enforce protein L-homochirality. This Shewanella sp. (strain MR-4) protein is D-aminoacyl-tRNA deacylase.